The primary structure comprises 271 residues: Aquaporin-11 (271 aa).

The Cytoplasmic portion of the chain corresponds to 1–14 (MSPLLGLRSELQDT). A helical transmembrane segment spans residues 15–35 (CTSLGLMLSVVLLMGLARVVA). Residues 36–41 (RQQLHR) are Lumenal-facing. The chain crosses the membrane as a helical span at residues 42 to 62 (PVAHAFVLEFLATFQLCCCTH). The Cytoplasmic segment spans residues 63–74 (ELQLLSEQHPAH). Residues 75–95 (PTWTLTLVYFFSLVHGLTLVG) form a helical membrane-spanning segment. The Lumenal segment spans residues 96 to 163 (TSSNPCGVMM…ACKNPIRVDL (68 aa)). An NPC motif is present at residues 99 to 101 (NPC). A helical transmembrane segment spans residues 164 to 184 (LKAVITEAVCSFLFHSALLHF). Residues 185-194 (QEVRTKLRIH) are Cytoplasmic-facing. The helical transmembrane segment at 195 to 215 (LLAALITFLVYAGGSLTGAVF) threads the bilayer. Residues 216–218 (NPA) carry the NPA motif. Residues 216–234 (NPALALSLHFMCFDEAFPQ) lie on the Lumenal side of the membrane. Residues 235–255 (FFIVYWLAPSLGILLMILMFS) traverse the membrane as a helical segment. Residues 256–271 (FFLPWLHNNHTINKKE) lie on the Cytoplasmic side of the membrane.

It belongs to the MIP/aquaporin (TC 1.A.8) family. AQP11/AQP12 subfamily. As to quaternary structure, homodimer; disulfide-linked. Homotetramer. Can also form homomultimer. In terms of processing, not glycosylated. Detected in the sperm head and tail (at protein level). Expressed in subcutaneous adipocytes. Expressed in testis, kidney and ejaculated spermatozoa.

It localises to the endoplasmic reticulum membrane. The protein localises to the cytoplasmic vesicle membrane. Its subcellular location is the cell membrane. The catalysed reaction is H2O(in) = H2O(out). The enzyme catalyses glycerol(in) = glycerol(out). It carries out the reaction H2O2(out) = H2O2(in). Channel protein that facilitates the transport of water, glycerol and hydrogen peroxide across membrane of cell or organelles guaranteeing intracellular homeostasis in several organes like liver, kidney and brain. In situation of stress, participates in endoplasmic reticulum (ER) homeostasis by regulating redox homeostasis through the transport of hydrogen peroxide across the endoplasmic reticulum membrane thereby regulating the oxidative stress through the NADPH oxidase 2 pathway. Plays a role by maintaining an environment suitable for translation or protein foldings in the ER lumen namely by participating in the PKD1 glycosylation processing resulting in regulation of PKD1 membrane trafficking thereby preventing the accumulation of unfolding protein in ER. Plays a role in the proximal tubule function by regulating its endosomal acidification. May play a role in postnatal kidney development. The protein is Aquaporin-11 of Homo sapiens (Human).